The following is a 242-amino-acid chain: DnaJ homolog subfamily B member 6 (242 aa).

Residues 2-69 enclose the J domain; it reads VDYYEVLGVQ…KKRDIYDRYG (68 aa). The interaction with HSP70 stretch occupies residues 2–146; that stretch reads VDYYEVLGVQ…TGSFFSTFSG (145 aa). An interaction with KRT18 region spans residues 119 to 242; sequence FEDFFGHRRG…KEQLLRLDNK (124 aa). Arg-135 bears the Omega-N-methylarginine mark.

Homooligomer. Interacts with BAG3, HSPB8 and STUB1. Interacts with ALKBH1. Interacts with HSP70, KRT18 and PTTG. As to expression, expressed in all tissues examined with highest expression in brain and retina and lower levels observed in testis, spleen, heart, liver and kidney.

It localises to the cytoplasm. The protein resides in the perinuclear region. It is found in the nucleus. Its subcellular location is the myofibril. The protein localises to the sarcomere. It localises to the z line. Functionally, has a stimulatory effect on the ATPase activity of HSP70 in a dose-dependent and time-dependent manner and hence acts as a co-chaperone of HSP70. Plays an indispensable role in the organization of KRT8/KRT18 filaments. Acts as an endogenous molecular chaperone for neuronal proteins including huntingtin. Suppresses aggregation and toxicity of polyglutamine-containing, aggregation-prone proteins. Also reduces cellular toxicity and caspase-3 activity. This chain is DnaJ homolog subfamily B member 6 (DNAJB6), found in Bos taurus (Bovine).